The following is a 95-amino-acid chain: Co-chaperonin GroES (95 aa).

Belongs to the GroES chaperonin family. In terms of assembly, heptamer of 7 subunits arranged in a ring. Interacts with the chaperonin GroEL.

Its subcellular location is the cytoplasm. Together with the chaperonin GroEL, plays an essential role in assisting protein folding. The GroEL-GroES system forms a nano-cage that allows encapsulation of the non-native substrate proteins and provides a physical environment optimized to promote and accelerate protein folding. GroES binds to the apical surface of the GroEL ring, thereby capping the opening of the GroEL channel. The polypeptide is Co-chaperonin GroES (Chlorobium limicola (strain DSM 245 / NBRC 103803 / 6330)).